The primary structure comprises 203 residues: Thymidylate kinase (203 aa).

An ATP-binding site is contributed by 14-21 (GGEGIGKS).

This sequence belongs to the thymidylate kinase family.

The enzyme catalyses dTMP + ATP = dTDP + ADP. In terms of biological role, phosphorylation of dTMP to form dTDP in both de novo and salvage pathways of dTTP synthesis. In Rickettsia conorii (strain ATCC VR-613 / Malish 7), this protein is Thymidylate kinase.